The sequence spans 60 residues: Large ribosomal subunit protein bL32 (60 aa).

A disordered region spans residues 1-60 (MAVQQNKKSPSKRGMHRSHNALTVPGIAVEPTTGETHLRHHISPNGFYRGRQVLKNKSEA). The segment covering 9–19 (SPSKRGMHRSH) has biased composition (basic residues).

Belongs to the bacterial ribosomal protein bL32 family.

This Paracidovorax citrulli (strain AAC00-1) (Acidovorax citrulli) protein is Large ribosomal subunit protein bL32.